We begin with the raw amino-acid sequence, 784 residues long: Cadherin-15 (784 aa).

The N-terminal stretch at 1–21 (MGSALLLALGLLAQSLGLSWA) is a signal peptide. Residues 22–59 (VPEPKPSTLYPWRRASAPGRVRRAWVIPPISVSENHKR) constitute a propeptide that is removed on maturation. Cadherin domains are found at residues 60 to 151 (LPYP…RPAF), 152 to 259 (LQDV…APEF), 260 to 374 (TKDE…APVF), 375 to 480 (PENP…DHAP), and 481 to 589 (ALAL…TCLP). Residues 60–605 (LPYPLVQIKS…GGGVGVSLGA (546 aa)) are Extracellular-facing. Asn106 and Asn226 each carry an N-linked (GlcNAc...) asparagine glycan. N-linked (GlcNAc...) asparagine glycosylation is found at Asn530, Asn537, and Asn575. The helical transmembrane segment at 606-625 (LVIVLASTVVLLVLILLAAL) threads the bilayer. Residues 626–784 (RTRFRGHSRG…ARLADMYGHQ (159 aa)) lie on the Cytoplasmic side of the membrane. Residues 676-700 (EPRATSRSLGRPPLRRDAPFSYVPQ) form a disordered region.

In terms of tissue distribution, skeletal muscle.

The protein resides in the cell membrane. Functionally, cadherins are calcium-dependent cell adhesion proteins. They preferentially interact with themselves in a homophilic manner in connecting cells; cadherins may thus contribute to the sorting of heterogeneous cell types. M-cadherin is part of the myogenic program and may provide a trigger for terminal muscle differentiation. This Mus musculus (Mouse) protein is Cadherin-15 (Cdh15).